The following is a 657-amino-acid chain: Threonine--tRNA ligase (657 aa).

The TGS domain maps to 1–61; the sequence is MINVTLPDGS…EGDASVAIIT (61 aa). A catalytic region spans residues 244 to 549; it reads DHRKLGAQLD…LIENYAGSFP (306 aa). Cys-349, His-400, and His-526 together coordinate Zn(2+).

This sequence belongs to the class-II aminoacyl-tRNA synthetase family. In terms of assembly, homodimer. Zn(2+) serves as cofactor.

It localises to the cytoplasm. It catalyses the reaction tRNA(Thr) + L-threonine + ATP = L-threonyl-tRNA(Thr) + AMP + diphosphate + H(+). Functionally, catalyzes the attachment of threonine to tRNA(Thr) in a two-step reaction: L-threonine is first activated by ATP to form Thr-AMP and then transferred to the acceptor end of tRNA(Thr). Also edits incorrectly charged L-seryl-tRNA(Thr). The protein is Threonine--tRNA ligase of Hyphomonas neptunium (strain ATCC 15444).